The sequence spans 588 residues: MQKKTLSISCNPFPASRKIYQQSLLFSDVRVPLREISLTDGSNEKPLKVYDTSGPYTDKDTIIDFTKGLPAISLPWLSKRADTESYSARSVKPEDNGLAYDTKTVPAFKQKRPILRAKNGKAITQMAYARAGIITAEMEYVAIRENEGLEIKNQQKAQSDETCNGSIPEIYTAEFVRNEIACGRAIIPKNINHPECEPMIIGRNFRVKINANIGNSAVTSSMAEEIDKMVWAIHWGADTVMDLSTGRNIHNIREWILRNSPVPIGTVPLYQALEKVQGIAENLTWDIFRDTLIEQAEQGVDYFTIHAGLRLPFIPLTANRVTGIVSRGGSIMAKWCLHHHTESFLYEHFNEICDIARTYDISLSLGDGLRPGSIADANDEAQFAELKTLGELTKIAWAKDVQVMIEGPGHIPMHKIKENMEQQLDLCHEAPFYTLGPLTTDIAPGYDHITSAIGAAMIGWFGTAMLCYVTPKEHLGLPDKNDVKTGVITYKIAAHAADLAKGLPRAQLRDNALSRARFDFRWHDQFNLSLDPETACAFHDETMPKEAHKLVHFCSMCGPKFCSMRISHDIREAAAINKPKGDGIGCQV.

Residues asparagine 212, methionine 241, tyrosine 270, histidine 306, 326 to 328, 367 to 370, and glutamate 406 each bind substrate; these read SRG and DGLR. Histidine 410 is a Zn(2+) binding site. Tyrosine 433 provides a ligand contact to substrate. Histidine 474 is a Zn(2+) binding site. [4Fe-4S] cluster contacts are provided by cysteine 554, cysteine 557, and cysteine 562.

This sequence belongs to the ThiC family. Homodimer. Requires [4Fe-4S] cluster as cofactor.

The enzyme catalyses 5-amino-1-(5-phospho-beta-D-ribosyl)imidazole + S-adenosyl-L-methionine = 4-amino-2-methyl-5-(phosphooxymethyl)pyrimidine + CO + 5'-deoxyadenosine + formate + L-methionine + 3 H(+). The protein operates within cofactor biosynthesis; thiamine diphosphate biosynthesis. Its function is as follows. Catalyzes the synthesis of the hydroxymethylpyrimidine phosphate (HMP-P) moiety of thiamine from aminoimidazole ribotide (AIR) in a radical S-adenosyl-L-methionine (SAM)-dependent reaction. In Bartonella quintana (strain Toulouse) (Rochalimaea quintana), this protein is Phosphomethylpyrimidine synthase.